The following is a 312-amino-acid chain: Protein Rep40 (312 aa).

The region spanning 84-239 (DPQYAASVFL…LDHDFGKVTK (156 aa)) is the SF3 helicase domain. 110-117 (GPATTGKT) is an ATP binding site. The tract at residues 264-301 (KGGAKKRPAPSDADISEPKRVRESVAQPSTSDAEASIN) is disordered.

As to quaternary structure, homooligomer.

The protein localises to the host nucleus. It catalyses the reaction ATP + H2O = ADP + phosphate + H(+). In terms of biological role, plays a critical role during packaging of viral DNA into empty capsids, where they are thought to be part of the packaging motor complex. The single stranded genomic DNA is packaged in a 3' to 5' direction and requires the association of viral DNA with Rep40. The polypeptide is Protein Rep40 (Rep40) (Mammalia (AAV-2)).